Reading from the N-terminus, the 54-residue chain is Ovomucoid (54 aa).

A Kazal-like domain is found at 4–54 (VDCSDYPRPVCTLDYMPLCGSDNKTYSNKCNFCNAVVDSNGTITLSHFGRC). Cystine bridges form between Cys-6/Cys-36, Cys-14/Cys-33, and Cys-22/Cys-54. Asn-43 is a glycosylation site (N-linked (GlcNAc...) asparagine).

The protein localises to the secreted. This is Ovomucoid from Corvus albus (Pied crow).